The sequence spans 47 residues: Lysis protein for colicin E8 (47 aa).

Positions 1–19 are cleaved as a signal peptide; it reads MKKITGIILLLLAVIILAA. C20 carries the N-palmitoyl cysteine lipid modification. The S-diacylglycerol cysteine moiety is linked to residue C20.

The protein localises to the cell outer membrane. Lysis proteins are required for both colicin release and partial cell lysis. This is Lysis protein for colicin E8 (lys) from Escherichia coli.